Reading from the N-terminus, the 295-residue chain is Nitrogenase iron protein (295 aa).

11-18 (GKGGIGKS) is an ATP binding site. Cys99 contributes to the [4Fe-4S] cluster binding site. Arg102 carries the ADP-ribosylarginine; by dinitrogenase reductase ADP-ribosyltransferase modification. Residue Cys133 participates in [4Fe-4S] cluster binding.

This sequence belongs to the NifH/BchL/ChlL family. As to quaternary structure, homodimer. [4Fe-4S] cluster serves as cofactor. Post-translationally, the reversible ADP-ribosylation of Arg-102 inactivates the nitrogenase reductase and regulates nitrogenase activity.

The enzyme catalyses N2 + 8 reduced [2Fe-2S]-[ferredoxin] + 16 ATP + 16 H2O = H2 + 8 oxidized [2Fe-2S]-[ferredoxin] + 2 NH4(+) + 16 ADP + 16 phosphate + 6 H(+). Functionally, the key enzymatic reactions in nitrogen fixation are catalyzed by the nitrogenase complex, which has 2 components: the iron protein and the molybdenum-iron protein. This chain is Nitrogenase iron protein, found in Zymomonas mobilis subsp. mobilis (strain ATCC 31821 / ZM4 / CP4).